The following is a 431-amino-acid chain: Histidinol dehydrogenase (431 aa).

NAD(+)-binding residues include Tyr130, Gln192, and Asn215. Residues Ser238, Gln260, and His263 each contribute to the substrate site. Residues Gln260 and His263 each contribute to the Zn(2+) site. Catalysis depends on proton acceptor residues Glu328 and His329. 4 residues coordinate substrate: His329, Asp362, Glu416, and His421. Asp362 contributes to the Zn(2+) binding site. His421 lines the Zn(2+) pocket.

The protein belongs to the histidinol dehydrogenase family. Requires Zn(2+) as cofactor.

The catalysed reaction is L-histidinol + 2 NAD(+) + H2O = L-histidine + 2 NADH + 3 H(+). It participates in amino-acid biosynthesis; L-histidine biosynthesis; L-histidine from 5-phospho-alpha-D-ribose 1-diphosphate: step 9/9. Its function is as follows. Catalyzes the sequential NAD-dependent oxidations of L-histidinol to L-histidinaldehyde and then to L-histidine. The sequence is that of Histidinol dehydrogenase from Thermosynechococcus vestitus (strain NIES-2133 / IAM M-273 / BP-1).